We begin with the raw amino-acid sequence, 455 residues long: 3-phosphoshikimate 1-carboxyvinyltransferase (455 aa).

The segment at 1-23 (MSHGSNPRPATARKSSDLKGTLR) is disordered. 3 residues coordinate 3-phosphoshikimate: Lys28, Ser29, and Arg33. Residue Lys28 coordinates phosphoenolpyruvate. 2 residues coordinate phosphoenolpyruvate: Gly100 and Arg128. Residues Ser173, Gln175, Asp326, and Lys353 each contribute to the 3-phosphoshikimate site. Gln175 provides a ligand contact to phosphoenolpyruvate. Asp326 serves as the catalytic Proton acceptor. Residues Arg357 and Arg405 each contribute to the phosphoenolpyruvate site.

Belongs to the EPSP synthase family. As to quaternary structure, monomer.

It localises to the cytoplasm. It carries out the reaction 3-phosphoshikimate + phosphoenolpyruvate = 5-O-(1-carboxyvinyl)-3-phosphoshikimate + phosphate. The protein operates within metabolic intermediate biosynthesis; chorismate biosynthesis; chorismate from D-erythrose 4-phosphate and phosphoenolpyruvate: step 6/7. Functionally, catalyzes the transfer of the enolpyruvyl moiety of phosphoenolpyruvate (PEP) to the 5-hydroxyl of shikimate-3-phosphate (S3P) to produce enolpyruvyl shikimate-3-phosphate and inorganic phosphate. In Rhizobium meliloti (strain 1021) (Ensifer meliloti), this protein is 3-phosphoshikimate 1-carboxyvinyltransferase.